The primary structure comprises 346 residues: Phosphoribosylformylglycinamidine cyclo-ligase (346 aa).

Belongs to the AIR synthase family.

The protein localises to the cytoplasm. It catalyses the reaction 2-formamido-N(1)-(5-O-phospho-beta-D-ribosyl)acetamidine + ATP = 5-amino-1-(5-phospho-beta-D-ribosyl)imidazole + ADP + phosphate + H(+). Its pathway is purine metabolism; IMP biosynthesis via de novo pathway; 5-amino-1-(5-phospho-D-ribosyl)imidazole from N(2)-formyl-N(1)-(5-phospho-D-ribosyl)glycinamide: step 2/2. This Vibrio campbellii (strain ATCC BAA-1116) protein is Phosphoribosylformylglycinamidine cyclo-ligase.